We begin with the raw amino-acid sequence, 371 residues long: RT1 class I histocompatibility antigen, AA alpha chain (371 aa).

The first 24 residues, 1–24 (MEAMAPRTLLLLLAAALAPTQTRA), serve as a signal peptide directing secretion. An alpha-1 region spans residues 25–114 (GSHSLRYFYT…LRGYYNQSEG (90 aa)). At 25-311 (GSHSLRYFYT…PSTDSNMETT (287 aa)) the chain is on the extracellular side. Asn-110 is a glycosylation site (N-linked (GlcNAc...) asparagine). Residues 115 to 206 (GSHTIQEMYG…ELGKETLLRS (92 aa)) form an alpha-2 region. Positions 207 to 298 (DPPEAHVTLH…GLPKPLSQRW (92 aa)) are alpha-3. One can recognise an Ig-like C1-type domain in the interval 209–295 (PEAHVTLHPR…EHEGLPKPLS (87 aa)). The N-linked (GlcNAc...) asparagine glycan is linked to Asn-280. Residues 299 to 311 (EPSPSTDSNMETT) form a connecting peptide region. The helical transmembrane segment at 312 to 336 (VIYVILGAVAMIGAVAIIGAMVAVV) threads the bilayer. Residues 337 to 371 (RRRKRNTGGKGGDYAPAPGRDSSQSSDVSLPDCKA) are Cytoplasmic-facing. The tract at residues 342-371 (NTGGKGGDYAPAPGRDSSQSSDVSLPDCKA) is disordered. Phosphoserine is present on residues Ser-362 and Ser-365.

Belongs to the MHC class I family. Heterodimer of an alpha chain and a beta chain (beta-2-microglobulin).

Its subcellular location is the membrane. In terms of biological role, involved in the presentation of foreign antigens to the immune system. In Rattus norvegicus (Rat), this protein is RT1 class I histocompatibility antigen, AA alpha chain.